The chain runs to 580 residues: 2-succinyl-5-enolpyruvyl-6-hydroxy-3-cyclohexene-1-carboxylate synthase (580 aa).

Belongs to the TPP enzyme family. MenD subfamily. Homodimer. Requires Mg(2+) as cofactor. Mn(2+) is required as a cofactor. It depends on thiamine diphosphate as a cofactor.

The catalysed reaction is isochorismate + 2-oxoglutarate + H(+) = 5-enolpyruvoyl-6-hydroxy-2-succinyl-cyclohex-3-ene-1-carboxylate + CO2. Its pathway is quinol/quinone metabolism; 1,4-dihydroxy-2-naphthoate biosynthesis; 1,4-dihydroxy-2-naphthoate from chorismate: step 2/7. It participates in quinol/quinone metabolism; menaquinone biosynthesis. Catalyzes the thiamine diphosphate-dependent decarboxylation of 2-oxoglutarate and the subsequent addition of the resulting succinic semialdehyde-thiamine pyrophosphate anion to isochorismate to yield 2-succinyl-5-enolpyruvyl-6-hydroxy-3-cyclohexene-1-carboxylate (SEPHCHC). This Listeria welshimeri serovar 6b (strain ATCC 35897 / DSM 20650 / CCUG 15529 / CIP 8149 / NCTC 11857 / SLCC 5334 / V8) protein is 2-succinyl-5-enolpyruvyl-6-hydroxy-3-cyclohexene-1-carboxylate synthase.